A 319-amino-acid polypeptide reads, in one-letter code: MTNIVFMGTPDFAVPVLRQLLDDGYRVVAVVTQPDKPKGRKRELVPPPVKVEAQKHGIPVLQPTKIREPEQYEQVLAFAPDLIVTAAFGQILPKALLDAPKYGCINVHASLLPELRGGAPIHYAIWQGKTKTGVTIMYMAEKLDAGDMLTQVEVPIEETDTVGTLHDKLSAAGAKLLSETLPLLLEGNLAPIPQEEEKATYAPNIRREQERIDWAQPGEAIYNHIRAFHPWPVTYTTYDGNVWKIWWGEKVPAPSLASPGTILSLEEDGIVVATGSETAIKITELQPAGKKRMAASEFLRGAGSRLAVGTKLGENNERT.

Residue 110–113 (SLLP) coordinates (6S)-5,6,7,8-tetrahydrofolate.

This sequence belongs to the Fmt family.

It carries out the reaction L-methionyl-tRNA(fMet) + (6R)-10-formyltetrahydrofolate = N-formyl-L-methionyl-tRNA(fMet) + (6S)-5,6,7,8-tetrahydrofolate + H(+). In terms of biological role, attaches a formyl group to the free amino group of methionyl-tRNA(fMet). The formyl group appears to play a dual role in the initiator identity of N-formylmethionyl-tRNA by promoting its recognition by IF2 and preventing the misappropriation of this tRNA by the elongation apparatus. The sequence is that of Methionyl-tRNA formyltransferase from Geobacillus thermodenitrificans (strain NG80-2).